The primary structure comprises 578 residues: Cholesterol oxidase (578 aa).

5 residues coordinate FAD: Gly15, Glu34, Gly85, Ala90, and Val230. The active-site Proton acceptor is the His470. Gly503 contacts FAD. The tract at residues Trp529–Ile551 is disordered. A compositionally biased stretch (basic and acidic residues) spans Gly533–Arg546.

This sequence belongs to the GMC oxidoreductase family. FAD serves as cofactor.

It is found in the secreted. The catalysed reaction is cholesterol + O2 = cholest-5-en-3-one + H2O2. It carries out the reaction cholest-5-en-3-one = cholest-4-en-3-one. The protein operates within steroid metabolism; cholesterol degradation. Functionally, bifunctional enzyme that catalyzes the oxidation and isomerization of cholesterol to cholestenone (cholest-4-en-3-one), an initial step in the cholesterol degradation process. Contributes to virulence. The chain is Cholesterol oxidase (choD) from Mycobacterium tuberculosis (strain CDC 1551 / Oshkosh).